Consider the following 379-residue polypeptide: Serine/threonine-protein kinase spe-6 (379 aa).

The 277-residue stretch at 26-302 folds into the Protein kinase domain; it reads WKVLRNIYSG…SQAATEHQVT (277 aa). ATP contacts are provided by residues 32–40 and Lys55; that span reads IYSGPFSDV. Asp147 functions as the Proton acceptor in the catalytic mechanism. Positions 331–379 are disordered; the sequence is ASAKLDAKDNANESMDIEFDDMPPKEGISKSLSAEKSCTKNVETARTEK. The span at 360-372 shows a compositional bias: polar residues; it reads KSLSAEKSCTKNV.

This sequence belongs to the protein kinase superfamily. CK1 Ser/Thr protein kinase family.

The enzyme catalyses L-seryl-[protein] + ATP = O-phospho-L-seryl-[protein] + ADP + H(+). The catalysed reaction is L-threonyl-[protein] + ATP = O-phospho-L-threonyl-[protein] + ADP + H(+). Functionally, serine/threonine-protein kinase which is involved in spermatogenesis. In spermatocytes, regulates meiosis and the localization and assembly of major sperm protein (MSP) into fibrous bodies. In addition, may suppress the initiation of spermiogenesis downstream of spe-8, spe-12, spe-27 and spe-29. In Caenorhabditis elegans, this protein is Serine/threonine-protein kinase spe-6.